The following is a 340-amino-acid chain: Glyceraldehyde-3-phosphate dehydrogenase, cytosolic (340 aa).

NAD(+)-binding positions include 16–17 (RI), Asp-38, and Arg-85. D-glyceraldehyde 3-phosphate contacts are provided by residues 156–158 (SCT), Thr-187, 216–217 (TG), and Arg-239. Cys-157 acts as the Nucleophile in catalysis. An NAD(+)-binding site is contributed by Asn-321.

This sequence belongs to the glyceraldehyde-3-phosphate dehydrogenase family. As to quaternary structure, homotetramer.

It localises to the cytoplasm. It carries out the reaction D-glyceraldehyde 3-phosphate + phosphate + NAD(+) = (2R)-3-phospho-glyceroyl phosphate + NADH + H(+). It functions in the pathway carbohydrate degradation; glycolysis; pyruvate from D-glyceraldehyde 3-phosphate: step 1/5. Functionally, key enzyme in glycolysis that catalyzes the first step of the pathway by converting D-glyceraldehyde 3-phosphate (G3P) into 3-phospho-D-glyceroyl phosphate. Essential for the maintenance of cellular ATP levels and carbohydrate metabolism. The chain is Glyceraldehyde-3-phosphate dehydrogenase, cytosolic (GAPC) from Pinus sylvestris (Scotch pine).